Consider the following 179-residue polypeptide: Fucolectin-4 (179 aa).

The N-terminal stretch at 1–23 (MEVKTIMLLFQILAISTLKQGSA) is a signal peptide. The interval 31-179 (EENVALRGRA…VEVNALLPVN (149 aa)) is F5/8 type C-like. Asparagine 58, aspartate 61, asparagine 63, and serine 72 together coordinate Ca(2+). Disulfide bonds link cysteine 73–cysteine 168, cysteine 104–cysteine 105, and cysteine 130–cysteine 146. Alpha-L-fucose-binding residues include histidine 75 and arginine 101. The Cell attachment site motif lies at 101 to 103 (RGD). Arginine 108 serves as a coordination point for alpha-L-fucose. Residues cysteine 168 and glutamate 169 each coordinate Ca(2+).

This sequence belongs to the fucolectin family. In terms of assembly, homotrimer. In terms of tissue distribution, gill mucous cells.

The protein resides in the secreted. Functionally, acts as a defensive agent. Recognizes blood group fucosylated oligosaccharides including A, B, H and Lewis B-type antigens. Does not recognize Lewis A antigen and has low affinity for monovalent haptens. The polypeptide is Fucolectin-4 (Anguilla japonica (Japanese eel)).